We begin with the raw amino-acid sequence, 779 residues long: Tricorn protease-interacting factor F3 (779 aa).

Substrate-binding positions include glutamate 102 and 231-235 (GAMEN). Histidine 266 contributes to the Zn(2+) binding site. Catalysis depends on glutamate 267, which acts as the Proton acceptor. The Zn(2+) site is built by histidine 270 and glutamate 289.

The protein belongs to the peptidase M1 family. As to quaternary structure, part of the tricorn proteolytic complex. Zn(2+) serves as cofactor.

Its subcellular location is the cytoplasm. In terms of biological role, proteases F1, F2 and F3 degrade oligopeptides produced by Tricorn (themselves probably produced by the proteasome), yielding free amino acids. This is Tricorn protease-interacting factor F3 (trf3) from Thermoplasma volcanium (strain ATCC 51530 / DSM 4299 / JCM 9571 / NBRC 15438 / GSS1).